The chain runs to 363 residues: Trans-2,3-enoyl-CoA reductase-like (363 aa).

S37 is subject to Phosphoserine. Transmembrane regions (helical) follow at residues 143-163 (WTTV…LFYL), 216-235 (NLLK…AYYI), 250-270 (VAIS…INVV), and 311-331 (ISFT…LMSI).

The protein belongs to the steroid 5-alpha reductase family.

The protein localises to the membrane. The protein resides in the endoplasmic reticulum. The polypeptide is Trans-2,3-enoyl-CoA reductase-like (TECRL) (Bos taurus (Bovine)).